Reading from the N-terminus, the 296-residue chain is Sulfotransferase 6B1 (296 aa).

His-112 functions as the Proton acceptor in the catalytic mechanism. 3'-phosphoadenylyl sulfate contacts are provided by residues Arg-134, Ser-142, Tyr-197, and 253–255; that span reads RKG.

Belongs to the sulfotransferase 1 family.

It is found in the cytoplasm. The protein resides in the cytosol. It carries out the reaction thyroxine + 3'-phosphoadenylyl sulfate = thyroxine sulfate + adenosine 3',5'-bisphosphate + H(+). Strongly inhibited by the divalent metal cations Fe(2+), Hg(2+), Co(2+), Zn(2+), Cu(2+) and Cd(2+). In terms of biological role, sulfotransferase that utilizes 3'-phospho-5'-adenylyl sulfate (PAPS) as sulfonate donor to catalyze the sulfate conjugation of a variety of xenobiotic and endogenous compounds, including dopamine, T3 (triiodo-L-thyronine), T4 (thyroxine), flavonoids, isoflavonoids, and other phenolic compounds. This is Sulfotransferase 6B1 from Danio rerio (Zebrafish).